Consider the following 500-residue polypeptide: Lysine--tRNA ligase (500 aa).

Glutamate 410 and glutamate 417 together coordinate Mg(2+).

The protein belongs to the class-II aminoacyl-tRNA synthetase family. Homodimer. Mg(2+) serves as cofactor.

Its subcellular location is the cytoplasm. The enzyme catalyses tRNA(Lys) + L-lysine + ATP = L-lysyl-tRNA(Lys) + AMP + diphosphate. The polypeptide is Lysine--tRNA ligase (Pseudomonas putida (strain W619)).